Consider the following 92-residue polypeptide: Putative defensin-like protein 225 (92 aa).

An N-terminal signal peptide occupies residues 1–26 (MKYGVLFMVSCGVMFLILSHVEEVEA). Intrachain disulfides connect Cys32-Cys92, Cys42-Cys70, and Cys68-Cys88.

It belongs to the DEFL family.

It localises to the secreted. The sequence is that of Putative defensin-like protein 225 (SCRL1) from Arabidopsis thaliana (Mouse-ear cress).